We begin with the raw amino-acid sequence, 380 residues long: Cytochrome b (380 aa).

The next 4 membrane-spanning stretches (helical) occupy residues 34–54 (FGSL…LLAM), 78–99 (WLIR…YMHI), 114–134 (WNTG…GYVL), and 179–199 (FFAL…IHLT). Residues H84 and H98 each contribute to the heme b site. Heme b-binding residues include H183 and H197. H202 provides a ligand contact to a ubiquinone. 4 helical membrane-spanning segments follow: residues 227 to 247 (LKDI…ALFS), 289 to 309 (LGGV…PLLH), 321 to 341 (LSQL…WIGS), and 348 to 368 (FIII…ILFP).

The protein belongs to the cytochrome b family. In terms of assembly, the cytochrome bc1 complex contains 11 subunits: 3 respiratory subunits (MT-CYB, CYC1 and UQCRFS1), 2 core proteins (UQCRC1 and UQCRC2) and 6 low-molecular weight proteins (UQCRH/QCR6, UQCRB/QCR7, UQCRQ/QCR8, UQCR10/QCR9, UQCR11/QCR10 and a cleavage product of UQCRFS1). This cytochrome bc1 complex then forms a dimer. Requires heme b as cofactor.

It is found in the mitochondrion inner membrane. Functionally, component of the ubiquinol-cytochrome c reductase complex (complex III or cytochrome b-c1 complex) that is part of the mitochondrial respiratory chain. The b-c1 complex mediates electron transfer from ubiquinol to cytochrome c. Contributes to the generation of a proton gradient across the mitochondrial membrane that is then used for ATP synthesis. The chain is Cytochrome b (MT-CYB) from Hydrobates pelagicus (European storm-petrel).